We begin with the raw amino-acid sequence, 81 residues long: ATP synthase subunit c, chloroplastic (81 aa).

Transmembrane regions (helical) follow at residues 7 to 27 and 57 to 77; these read AASV…PGVG and LAFM…LLFA.

It belongs to the ATPase C chain family. F-type ATPases have 2 components, F(1) - the catalytic core - and F(0) - the membrane proton channel. F(1) has five subunits: alpha(3), beta(3), gamma(1), delta(1), epsilon(1). F(0) has four main subunits: a(1), b(1), b'(1) and c(10-14). The alpha and beta chains form an alternating ring which encloses part of the gamma chain. F(1) is attached to F(0) by a central stalk formed by the gamma and epsilon chains, while a peripheral stalk is formed by the delta, b and b' chains.

Its subcellular location is the plastid. The protein resides in the chloroplast thylakoid membrane. In terms of biological role, f(1)F(0) ATP synthase produces ATP from ADP in the presence of a proton or sodium gradient. F-type ATPases consist of two structural domains, F(1) containing the extramembraneous catalytic core and F(0) containing the membrane proton channel, linked together by a central stalk and a peripheral stalk. During catalysis, ATP synthesis in the catalytic domain of F(1) is coupled via a rotary mechanism of the central stalk subunits to proton translocation. Its function is as follows. Key component of the F(0) channel; it plays a direct role in translocation across the membrane. A homomeric c-ring of between 10-14 subunits forms the central stalk rotor element with the F(1) delta and epsilon subunits. The protein is ATP synthase subunit c, chloroplastic of Arabis hirsuta (Hairy rock-cress).